Reading from the N-terminus, the 169-residue chain is ATP synthase subunit b (169 aa).

The chain crosses the membrane as a helical span at residues 11 to 31; it reads IPSFIAQVVNFGLLLGLLYLF.

Belongs to the ATPase B chain family. As to quaternary structure, F-type ATPases have 2 components, F(1) - the catalytic core - and F(0) - the membrane proton channel. F(1) has five subunits: alpha(3), beta(3), gamma(1), delta(1), epsilon(1). F(0) has three main subunits: a(1), b(2) and c(10-14). The alpha and beta chains form an alternating ring which encloses part of the gamma chain. F(1) is attached to F(0) by a central stalk formed by the gamma and epsilon chains, while a peripheral stalk is formed by the delta and b chains.

Its subcellular location is the cell membrane. F(1)F(0) ATP synthase produces ATP from ADP in the presence of a proton or sodium gradient. F-type ATPases consist of two structural domains, F(1) containing the extramembraneous catalytic core and F(0) containing the membrane proton channel, linked together by a central stalk and a peripheral stalk. During catalysis, ATP synthesis in the catalytic domain of F(1) is coupled via a rotary mechanism of the central stalk subunits to proton translocation. Functionally, component of the F(0) channel, it forms part of the peripheral stalk, linking F(1) to F(0). This chain is ATP synthase subunit b, found in Dehalococcoides mccartyi (strain ATCC BAA-2266 / KCTC 15142 / 195) (Dehalococcoides ethenogenes (strain 195)).